The chain runs to 362 residues: Class I histocompatibility antigen, Gogo-B*0102 alpha chain (362 aa).

Residues 1-24 (MRVTAPRTLLLLLSAALALTETWA) form the signal peptide. Residues 25–114 (GSHSMRYFDT…ALRYYNQSEA (90 aa)) are alpha-1. Topologically, residues 25 to 308 (GSHSMRYFDT…EPSSQSTIPI (284 aa)) are extracellular. N-linked (GlcNAc...) asparagine glycosylation occurs at Asn110. Positions 115-206 (GSHTFQRMFG…ENGRETLQRA (92 aa)) are alpha-2. 2 disulfide bridges follow: Cys125/Cys188 and Cys227/Cys283. The alpha-3 stretch occupies residues 207-298 (DTPKTHVTHH…GLPKPLTLRW (92 aa)). The region spanning 209–295 (PKTHVTHHPI…QHEGLPKPLT (87 aa)) is the Ig-like C1-type domain. The connecting peptide stretch occupies residues 299–308 (EPSSQSTIPI). Residues 309-332 (VGIVAGLAVLAVVVIGAVVTAVIC) form a helical membrane-spanning segment. Over 333 to 362 (RRKSSGGKGGSYSQAASSDSAQGSDVSLTA) the chain is Cytoplasmic. Positions 335–362 (KSSGGKGGSYSQAASSDSAQGSDVSLTA) are disordered. Residues 343-362 (SYSQAASSDSAQGSDVSLTA) show a composition bias toward low complexity.

It belongs to the MHC class I family. In terms of assembly, heterodimer of an alpha chain and a beta chain (beta-2-microglobulin).

The protein localises to the membrane. In terms of biological role, involved in the presentation of foreign antigens to the immune system. The protein is Class I histocompatibility antigen, Gogo-B*0102 alpha chain of Gorilla gorilla gorilla (Western lowland gorilla).